The chain runs to 229 residues: Potassium/proton antiporter CemA (229 aa).

The next 4 membrane-spanning stretches (helical) occupy residues 7–27, 114–134, 154–174, and 189–209; these read FTPL…SLSF, LICF…LLIL, ILLL…ELMI, and IISG…KYWI.

It belongs to the CemA family.

It localises to the plastid. The protein localises to the chloroplast inner membrane. The enzyme catalyses K(+)(in) + H(+)(out) = K(+)(out) + H(+)(in). Contributes to K(+)/H(+) antiport activity by supporting proton efflux to control proton extrusion and homeostasis in chloroplasts in a light-dependent manner to modulate photosynthesis. Prevents excessive induction of non-photochemical quenching (NPQ) under continuous-light conditions. Indirectly promotes efficient inorganic carbon uptake into chloroplasts. The polypeptide is Potassium/proton antiporter CemA (Gossypium barbadense (Sea Island cotton)).